The primary structure comprises 143 residues: Glutamate-rich protein 4 (143 aa).

A compositionally biased stretch (acidic residues) spans 90-106; that stretch reads LEEEEEDDDEEEQEEEG. The segment at 90–143 is disordered; that stretch reads LEEEEEDDDEEEQEEEGEGKNCVEENKGLQGKQGEKCSGNPYPAQRLPDFEMTI. Residues 107 to 116 are compositionally biased toward basic and acidic residues; that stretch reads EGKNCVEENK.

The protein is Glutamate-rich protein 4 (Erich4) of Rattus norvegicus (Rat).